We begin with the raw amino-acid sequence, 149 residues long: Transcription antitermination protein NusB (149 aa).

It belongs to the NusB family.

In terms of biological role, involved in transcription antitermination. Required for transcription of ribosomal RNA (rRNA) genes. Binds specifically to the boxA antiterminator sequence of the ribosomal RNA (rrn) operons. The polypeptide is Transcription antitermination protein NusB (Sphingopyxis alaskensis (strain DSM 13593 / LMG 18877 / RB2256) (Sphingomonas alaskensis)).